Reading from the N-terminus, the 304-residue chain is tRNA pseudouridine synthase B (304 aa).

Asp-41 functions as the Nucleophile in the catalytic mechanism.

It belongs to the pseudouridine synthase TruB family. Type 1 subfamily.

It carries out the reaction uridine(55) in tRNA = pseudouridine(55) in tRNA. Functionally, responsible for synthesis of pseudouridine from uracil-55 in the psi GC loop of transfer RNAs. In Nitratidesulfovibrio vulgaris (strain ATCC 29579 / DSM 644 / CCUG 34227 / NCIMB 8303 / VKM B-1760 / Hildenborough) (Desulfovibrio vulgaris), this protein is tRNA pseudouridine synthase B.